A 64-amino-acid polypeptide reads, in one-letter code: UPF0370 protein YPA_2246 (64 aa).

The chain crosses the membrane as a helical span at residues 3–23; the sequence is WLADYWWIILILLVGMILNGI. The span at 36-47 shows a compositional bias: basic and acidic residues; sequence DNKPELPPHRDN. Residues 36–64 form a disordered region; the sequence is DNKPELPPHRDNNAQWDDEDDWPDQNKKK.

The protein belongs to the UPF0370 family.

The protein localises to the cell membrane. This is UPF0370 protein YPA_2246 from Yersinia pestis bv. Antiqua (strain Antiqua).